Consider the following 323-residue polypeptide: Staphylococcal-like nuclease CAN1 (323 aa).

A lipid anchor (N-myristoyl glycine) is attached at G2. The S-palmitoyl cysteine moiety is linked to residue C11. Positions 130–306 constitute a TNase-like domain; sequence NTLPVDTKSV…RQKRVGLWAS (177 aa). D143 is a binding site for Ca(2+). R213 is an active-site residue. A Ca(2+)-binding site is contributed by D218. Residues E221 and R255 contribute to the active site.

It belongs to the thermonuclease family. The cofactor is Ca(2+).

The protein localises to the cell membrane. Inhibited by Zn(2+). Its function is as follows. Enzyme that catalyzes the hydrolysis of both DNA and RNA at the 5' position of the phosphodiester bond. Possesses activity toward the single-stranded DNA, double-stranded DNA and RNA. May be involved in genomic DNA degradation during programmed cell death. The chain is Staphylococcal-like nuclease CAN1 (CAN1) from Arabidopsis thaliana (Mouse-ear cress).